The sequence spans 354 residues: UDP-N-acetylglucosamine--N-acetylmuramyl-(pentapeptide) pyrophosphoryl-undecaprenol N-acetylglucosamine transferase (354 aa).

Residues 15–17, N127, R163, S191, I244, 263–268, and Q288 each bind UDP-N-acetyl-alpha-D-glucosamine; these read TGG and ALTVSE.

It belongs to the glycosyltransferase 28 family. MurG subfamily.

The protein resides in the cell inner membrane. The enzyme catalyses di-trans,octa-cis-undecaprenyl diphospho-N-acetyl-alpha-D-muramoyl-L-alanyl-D-glutamyl-meso-2,6-diaminopimeloyl-D-alanyl-D-alanine + UDP-N-acetyl-alpha-D-glucosamine = di-trans,octa-cis-undecaprenyl diphospho-[N-acetyl-alpha-D-glucosaminyl-(1-&gt;4)]-N-acetyl-alpha-D-muramoyl-L-alanyl-D-glutamyl-meso-2,6-diaminopimeloyl-D-alanyl-D-alanine + UDP + H(+). It functions in the pathway cell wall biogenesis; peptidoglycan biosynthesis. Its function is as follows. Cell wall formation. Catalyzes the transfer of a GlcNAc subunit on undecaprenyl-pyrophosphoryl-MurNAc-pentapeptide (lipid intermediate I) to form undecaprenyl-pyrophosphoryl-MurNAc-(pentapeptide)GlcNAc (lipid intermediate II). In Aliivibrio salmonicida (strain LFI1238) (Vibrio salmonicida (strain LFI1238)), this protein is UDP-N-acetylglucosamine--N-acetylmuramyl-(pentapeptide) pyrophosphoryl-undecaprenol N-acetylglucosamine transferase.